Consider the following 77-residue polypeptide: U11-lycotoxin-Ls1a (77 aa).

The N-terminal stretch at 1–20 is a signal peptide; the sequence is MKLIILTGLVLFAIVSLIEA. Positions 21 to 26 are excised as a propeptide; it reads EEESGR.

It belongs to the neurotoxin 19 (CSTX) family. 10 (U11-Lctx) subfamily. Contains 4 disulfide bonds. Expressed by the venom gland.

It localises to the secreted. This Lycosa singoriensis (Wolf spider) protein is U11-lycotoxin-Ls1a.